The chain runs to 310 residues: Olfactory receptor 8B12 (310 aa).

The Extracellular segment spans residues 1 to 24 (MAAKNSSVTEFILEGLTHQPGLRI). Residue asparagine 5 is glycosylated (N-linked (GlcNAc...) asparagine). Residues 25–45 (PLFFLFLGFYTVTVVGNLGLI) form a helical membrane-spanning segment. Residues 46–53 (TLIGLNSH) lie on the Cytoplasmic side of the membrane. The helical transmembrane segment at 54–74 (LHTPMYFFLFNLSLIDFCFST) threads the bilayer. At 75–98 (TITPKMLMSFVSRKNIISFTGCMT) the chain is on the extracellular side. Cysteine 96 and cysteine 188 form a disulfide bridge. A helical membrane pass occupies residues 99 to 119 (QLFFFCFFVVSESFILSAMAY). At 120 to 138 (DRYVAICNPLLYTVTMSCQ) the chain is on the cytoplasmic side. The helical transmembrane segment at 139–159 (VCLLLLLGAYGMGFAGAMAHT) threads the bilayer. The Extracellular segment spans residues 160-196 (GSIMNLTFCADNLVNHFMCDILPLLELSCNSSYMNEL). N-linked (GlcNAc...) asparagine glycans are attached at residues asparagine 164 and asparagine 189. Residues 197 to 216 (VVFIVVAVDVGMPIVTVFIS) traverse the membrane as a helical segment. Residues 217 to 236 (YALILSSILHNSSTEGRSKA) lie on the Cytoplasmic side of the membrane. A helical membrane pass occupies residues 237–257 (FSTCSSHIIVVSLFFGSGAFM). Topologically, residues 258–270 (YLKPLSILPLEQG) are extracellular. Residues 271 to 291 (KVSSLFYTIIVPVLNPLIYSL) form a helical membrane-spanning segment. Over 292–310 (RNKDVKVALRRTLGRKIFS) the chain is Cytoplasmic.

Belongs to the G-protein coupled receptor 1 family.

It is found in the cell membrane. Its function is as follows. Odorant receptor. This Homo sapiens (Human) protein is Olfactory receptor 8B12 (OR8B12).